A 111-amino-acid polypeptide reads, in one-letter code: MKKDFHSTYYIIVVEDLESHHVIGTATLFLERKFLRGKGICGHIEEVIVHPDHQRKAIGKLMVLTLIKLAFSLNSYKVILDCSDSNVGFYEKCGLSRAGIEMKKYASHSII.

Positions Met1–Ile111 constitute an N-acetyltransferase domain. Residues Lys33–Arg36 and Glu45–Val47 contribute to the substrate site. Acetyl-CoA-binding positions include Val47–Val49 and Arg55–Lys60. Substrate-binding positions include Tyr76–Lys77 and Asp81. Acetyl-CoA is bound at residue Tyr90–Lys92.

This sequence belongs to the acetyltransferase family. GNA1 subfamily.

It carries out the reaction D-glucosamine 6-phosphate + acetyl-CoA = N-acetyl-D-glucosamine 6-phosphate + CoA + H(+). It participates in nucleotide-sugar biosynthesis; UDP-N-acetyl-alpha-D-glucosamine biosynthesis; N-acetyl-alpha-D-glucosamine 1-phosphate from alpha-D-glucosamine 6-phosphate (route I): step 1/2. This is Glucosamine 6-phosphate N-acetyltransferase (gna1) from Schizosaccharomyces pombe (strain 972 / ATCC 24843) (Fission yeast).